Reading from the N-terminus, the 451-residue chain is Chromosomal replication initiator protein DnaA (451 aa).

The segment at 1–71 (MSEKEIWDKV…QAIIYDVIGY (71 aa)) is domain I, interacts with DnaA modulators. Positions 71–112 (YEVKPHFISEDELASYNNVNTQEVQEPQVQHSSIDDKTWGKE) are domain II. Residues 113–329 (QFNMHNTFDT…GALTRLLAYS (217 aa)) are domain III, AAA+ region. 4 residues coordinate ATP: G157, G159, K160, and T161. Residues 330 to 451 (KLQGKPITTE…ENLEKEIRNQ (122 aa)) form a domain IV, binds dsDNA region.

The protein belongs to the DnaA family. Oligomerizes as a right-handed, spiral filament on DNA at oriC.

The protein resides in the cytoplasm. In terms of biological role, plays an essential role in the initiation and regulation of chromosomal replication. ATP-DnaA binds to the origin of replication (oriC) to initiate formation of the DNA replication initiation complex once per cell cycle. Binds the DnaA box (a 9 base pair repeat at the origin) and separates the double-stranded (ds)DNA. Forms a right-handed helical filament on oriC DNA; dsDNA binds to the exterior of the filament while single-stranded (ss)DNA is stabiized in the filament's interior. The ATP-DnaA-oriC complex binds and stabilizes one strand of the AT-rich DNA unwinding element (DUE), permitting loading of DNA polymerase. After initiation quickly degrades to an ADP-DnaA complex that is not apt for DNA replication. Binds acidic phospholipids. The chain is Chromosomal replication initiator protein DnaA from Staphylococcus epidermidis (strain ATCC 35984 / DSM 28319 / BCRC 17069 / CCUG 31568 / BM 3577 / RP62A).